The primary structure comprises 124 residues: MADLAKIVDDLSALTVLEAAELSKLLEEKWGVSAAAPVAVAAAGGAAPAAAAEEKTEFDVVLADGGANKINVIKEVRAITGLGLKEAKDLVEGAPKAVKEGASKDEAEKIKAQLEAAGAKVELK.

It belongs to the bacterial ribosomal protein bL12 family. As to quaternary structure, homodimer. Part of the ribosomal stalk of the 50S ribosomal subunit. Forms a multimeric L10(L12)X complex, where L10 forms an elongated spine to which 2 to 4 L12 dimers bind in a sequential fashion. Binds GTP-bound translation factors.

Forms part of the ribosomal stalk which helps the ribosome interact with GTP-bound translation factors. Is thus essential for accurate translation. The protein is Large ribosomal subunit protein bL12 of Brucella anthropi (strain ATCC 49188 / DSM 6882 / CCUG 24695 / JCM 21032 / LMG 3331 / NBRC 15819 / NCTC 12168 / Alc 37) (Ochrobactrum anthropi).